A 101-amino-acid polypeptide reads, in one-letter code: Large ribosomal subunit protein uL23 (101 aa).

The protein belongs to the universal ribosomal protein uL23 family. In terms of assembly, part of the 50S ribosomal subunit. Contacts protein L29, and trigger factor when it is bound to the ribosome.

Its function is as follows. One of the early assembly proteins it binds 23S rRNA. One of the proteins that surrounds the polypeptide exit tunnel on the outside of the ribosome. Forms the main docking site for trigger factor binding to the ribosome. The protein is Large ribosomal subunit protein uL23 of Micrococcus luteus (strain ATCC 4698 / DSM 20030 / JCM 1464 / CCM 169 / CCUG 5858 / IAM 1056 / NBRC 3333 / NCIMB 9278 / NCTC 2665 / VKM Ac-2230) (Micrococcus lysodeikticus).